We begin with the raw amino-acid sequence, 104 residues long: Large ribosomal subunit protein uL24 (104 aa).

Belongs to the universal ribosomal protein uL24 family. Part of the 50S ribosomal subunit.

One of two assembly initiator proteins, it binds directly to the 5'-end of the 23S rRNA, where it nucleates assembly of the 50S subunit. In terms of biological role, one of the proteins that surrounds the polypeptide exit tunnel on the outside of the subunit. This is Large ribosomal subunit protein uL24 from Aliivibrio fischeri (strain ATCC 700601 / ES114) (Vibrio fischeri).